The sequence spans 1909 residues: Endoribonuclease Dicer homolog 1 (1909 aa).

The segment at 99-177 (TVKENGLQKN…NNKKKRECNN (79 aa)) is disordered. Residues 110–124 (GKRDEFSKEEGDKDR) are compositionally biased toward basic and acidic residues. Over residues 131–146 (SYQSERSNLSGRGHVN) the composition is skewed to polar residues. Positions 147–177 (NSREGDRFMNRKRTRNWDEAGNNKKKRECNN) are enriched in basic and acidic residues. The 178-residue stretch at 256–433 (VLEQAKAKNT…QVDCAIKIRN (178 aa)) folds into the Helicase ATP-binding domain. An ATP-binding site is contributed by 269 to 276 (LETGAGKT). A DECH box motif is present at residues 378–381 (DECH). One can recognise a Helicase C-terminal domain in the interval 651-812 (SLIKLLLKYQ…RTDLSHLKDT (162 aa)). A Dicer dsRNA-binding fold domain is found at 840–935 (AVGLVHFYCS…LPDKGSGQDA (96 aa)). Positions 929–952 (KGSGQDAEKADQDDEGEPVPGTAR) are disordered. Positions 1189 to 1318 (EVEEDLSKGK…LPPELCVVHP (130 aa)) constitute a PAZ domain. RNase III domains follow at residues 1342–1518 (LAVQ…VEGG) and 1559–1707 (FVGL…LDSG). Glutamate 1597, aspartate 1693, and glutamate 1696 together coordinate Mg(2+). DRBM domains lie at 1733-1796 (HPVR…ALKE) and 1831-1906 (FTRQ…LLNK). A disordered region spans residues 1801–1831 (ESKEKHINNGNAGEDQGENENGNKKNGHQPF).

The protein belongs to the helicase family. Dicer subfamily. Interacts (via N-terminus) with DDL. Interacts (via DRBM domains) with DRB1, DRB2 and DRB5. May interact with AGO1 or AGO10 through their common PAZ domains. Requires Mg(2+) as cofactor. Mn(2+) is required as a cofactor. Highly expressed in flowers and seeds and detected in leaves and stems. Found in ovule integuments, inflorescence and floral meristems, stigma of flowers until just before pollination, vasculature of the funiculus, and embryo.

Its subcellular location is the nucleus. Ribonuclease (RNase) III involved in RNA-mediated post-transcriptional gene silencing (PTGS). Functions in the microRNAs (miRNAs) biogenesis pathway by cleaving primary miRNAs (pri-miRNAs) and precursor miRNAs (pre-miRNAs). Functions with DRB1/HYL1 and SERRATE proteins for accurate pri-miRNAs to miRNAs processing. Indirectly involved in the production of trans-acting small interfering RNAs (ta-siRNAs) derived from the TAS1, TAS2 or TAS3 endogenous transcripts by participating in the production of their initiating miRNAs. Involved in the processing of natural siRNAs (nat-siRNAs, derived from cis-natural antisense transcripts) by cleaving 24 nucleotide nat-siRNAs into 21 nucleotide nat-siRNAs. Can produce RDR6-dependent endogenous ta-siRNAs derived from TAS1 and TAS2. Required for the production of 30-40 nucleotide bacterial-induced long siRNAs (lsiRNA). Acts redundantly with DICER-LIKE 3 (DCL3) to promote flowering via repression of FLOWERING LOCUS C (FLC). Represses antiviral RNA silencing through negative regulation of the expression of DCL4 and DCL3. This is Endoribonuclease Dicer homolog 1 (DCL1) from Arabidopsis thaliana (Mouse-ear cress).